The primary structure comprises 219 residues: Mediator of RNA polymerase II transcription subunit 20b (219 aa).

The protein belongs to the Mediator complex subunit 20 family. As to quaternary structure, component of the Mediator complex.

It is found in the nucleus. Component of the Mediator complex, a coactivator involved in the regulated transcription of nearly all RNA polymerase II-dependent genes. Mediator functions as a bridge to convey information from gene-specific regulatory proteins to the basal RNA polymerase II transcription machinery. The Mediator complex, having a compact conformation in its free form, is recruited to promoters by direct interactions with regulatory proteins and serves for the assembly of a functional preinitiation complex with RNA polymerase II and the general transcription factors. This is Mediator of RNA polymerase II transcription subunit 20b (MED20B) from Arabidopsis thaliana (Mouse-ear cress).